The sequence spans 302 residues: Methionyl-tRNA formyltransferase (302 aa).

107 to 110 (SDLP) provides a ligand contact to (6S)-5,6,7,8-tetrahydrofolate.

The protein belongs to the Fmt family.

The catalysed reaction is L-methionyl-tRNA(fMet) + (6R)-10-formyltetrahydrofolate = N-formyl-L-methionyl-tRNA(fMet) + (6S)-5,6,7,8-tetrahydrofolate + H(+). Its function is as follows. Attaches a formyl group to the free amino group of methionyl-tRNA(fMet). The formyl group appears to play a dual role in the initiator identity of N-formylmethionyl-tRNA by promoting its recognition by IF2 and preventing the misappropriation of this tRNA by the elongation apparatus. The protein is Methionyl-tRNA formyltransferase of Rickettsia massiliae (strain Mtu5).